Reading from the N-terminus, the 565-residue chain is MSEQDKNVKLSDNERMKRESNFLRGTIATDLKDEITGGFTADNFQLIRFHGMYQQDDRDIRGERAKQKLEPLHNVMLRARMPGGIIKPEQWLAIDKFAEEKTSYGSIRLTTRQTFQFHGVLKPNIKGMHQLLDSVGIDSIATAGDVNRNVLCTTNPVESELHQEAYEWAAKISEHLLPKTKAYAEIWLNGEKAETTEEPILGSNYLPRKFKTTVTIPPNNEVDVHANDLNFVAIAENGKLIGFNVLVGGGLAMTHGDTATYPRKADDFGFIPLEHTLKIAEHVVSVQRDWGNRSNRKNAKTKYTLDRVGVDVFKAEVEKRAGVEFASSRPYKFTHRGDRIGWVEGIDGKHHLTLFIQSGRILDYPDKPLKTGCRKIAEVHQGDMRMTANQNLIIAGVAANQKAVIEEIARNHGLIDDKDTEQRKNSMACVALPTCPLAMAEAERYLPSLVEKIEALLAKHGVPNDSIIMRVVGCPNGCGRAMLAEAGLVGKGPGKYNVYLGGNLEGTRIPKLYLENVGEDVYLAAFDELIGQWVNERNDGECFGDFVIRKGIVAEVKVSVTDFHA.

The [4Fe-4S] cluster site is built by Cys429, Cys435, Cys474, and Cys478. Cys478 is a binding site for siroheme.

It belongs to the nitrite and sulfite reductase 4Fe-4S domain family. In terms of assembly, alpha(8)-beta(8). The alpha component is a flavoprotein, the beta component is a hemoprotein. It depends on siroheme as a cofactor. The cofactor is [4Fe-4S] cluster.

The catalysed reaction is hydrogen sulfide + 3 NADP(+) + 3 H2O = sulfite + 3 NADPH + 4 H(+). Its pathway is sulfur metabolism; hydrogen sulfide biosynthesis; hydrogen sulfide from sulfite (NADPH route): step 1/1. Functionally, component of the sulfite reductase complex that catalyzes the 6-electron reduction of sulfite to sulfide. This is one of several activities required for the biosynthesis of L-cysteine from sulfate. The polypeptide is Sulfite reductase [NADPH] hemoprotein beta-component (Pseudoalteromonas translucida (strain TAC 125)).